The following is a 306-amino-acid chain: Non-specific ribonucleoside hydrolase RihC (306 aa).

Residue His-235 is part of the active site.

Belongs to the IUNH family. RihC subfamily.

In terms of biological role, hydrolyzes both purine and pyrimidine ribonucleosides with a broad-substrate specificity. This Salmonella paratyphi C (strain RKS4594) protein is Non-specific ribonucleoside hydrolase RihC.